We begin with the raw amino-acid sequence, 855 residues long: Inactive rhomboid protein 1 (855 aa).

Positions 1–36 (MSEARRDSTSSLQRKKPPWLKLDIPSAVPPTAEEPS) are disordered. The Cytoplasmic portion of the chain corresponds to 1 to 411 (MSEARRDSTS…HRPFFTYWLT (411 aa)). Phosphoserine occurs at positions 76 and 176. Residues Thr180 and Thr183 each carry the phosphothreonine modification. At Ser390 the chain carries Phosphoserine. The chain crosses the membrane as a helical span at residues 412-432 (FVHSLVTILAVCIYGIAPVGF). At 433–655 (SQHETVDSVL…NPEVPDQFYR (223 aa)) the chain is on the lumenal side. Asn583 is a glycosylation site (N-linked (GlcNAc...) asparagine). A helical transmembrane segment spans residues 656–676 (LWLSLFLHAGILHCLVSICFQ). Over 677–691 (MTVLRDLEKLAGWHR) the chain is Cytoplasmic. Residues 692–712 (IAIIYLLSGVTGNLASAIFLP) traverse the membrane as a helical segment. The Lumenal portion of the chain corresponds to 713–714 (YR). The chain crosses the membrane as a helical span at residues 715–735 (AEVGPAGSQFGILACLFVELF). Residues 736 to 746 (QSWQILARPWR) lie on the Cytoplasmic side of the membrane. A helical transmembrane segment spans residues 747-767 (AFFKLLAVVLFLFTFGLLPWI). Topologically, residues 768-772 (DNFAH) are lumenal. The helical transmembrane segment at 773–793 (ISGFISGLFLSFAFLPYISFG) threads the bilayer. The Cytoplasmic segment spans residues 794 to 803 (KFDLYRKRCQ). Residues 804–824 (IIIFQVVFLGLLAGLVVLFYF) traverse the membrane as a helical segment. Topologically, residues 825-855 (YPVRCEWCEFLTCIPFTDKFCEKYELDAQLH) are lumenal.

The protein belongs to the peptidase S54 family. In terms of assembly, homodimer, or homooligomer. Interacts with TGFA and HBEGF. Interacts with EGF; may retain EGF in the endoplasmic reticulum and regulates its degradation through the endoplasmic reticulum-associated degradation (ERAD). Interacts (via cytoplasmic N-terminus) with FRMD8/iTAP; this interaction leads to mutual protein stabilization. Interacts with ADAM17/TACE.

It is found in the endoplasmic reticulum membrane. The protein resides in the golgi apparatus membrane. Regulates ADAM17 protease, a sheddase of the epidermal growth factor (EGF) receptor ligands and TNF, thereby plays a role in sleep, cell survival, proliferation, migration and inflammation. Does not exhibit any protease activity on its own. The chain is Inactive rhomboid protein 1 (RHBDF1) from Papio anubis (Olive baboon).